A 263-amino-acid polypeptide reads, in one-letter code: Ribosomal RNA small subunit methyltransferase A (263 aa).

S-adenosyl-L-methionine contacts are provided by His13, Leu15, Gly40, Glu61, Asp86, and Asn105.

The protein belongs to the class I-like SAM-binding methyltransferase superfamily. rRNA adenine N(6)-methyltransferase family. RsmA subfamily.

It is found in the cytoplasm. It carries out the reaction adenosine(1518)/adenosine(1519) in 16S rRNA + 4 S-adenosyl-L-methionine = N(6)-dimethyladenosine(1518)/N(6)-dimethyladenosine(1519) in 16S rRNA + 4 S-adenosyl-L-homocysteine + 4 H(+). Its function is as follows. Specifically dimethylates two adjacent adenosines (A1518 and A1519) in the loop of a conserved hairpin near the 3'-end of 16S rRNA in the 30S particle. May play a critical role in biogenesis of 30S subunits. This Dichelobacter nodosus (strain VCS1703A) protein is Ribosomal RNA small subunit methyltransferase A.